Consider the following 140-residue polypeptide: uncharacterized protein (140 aa).

The segment covering methionine 1–alanine 19 has biased composition (polar residues). The segment at methionine 1–aspartate 140 is disordered. The N-myristoyl glycine moiety is linked to residue glycine 2. Cysteine 4 carries the S-palmitoyl cysteine lipid modification. A compositionally biased stretch (basic and acidic residues) spans isoleucine 27–histidine 40. Residues lysine 41 to glutamine 51 are compositionally biased toward basic residues. The span at aspartate 73–aspartate 140 shows a compositional bias: basic and acidic residues.

It to S.pombe new13. Myristoylated. In terms of processing, the N-myristoylated protein is further palmitoylated by ERF2, PFA4 and slightly by PFA5, but not by PFA3.

The protein localises to the cytoplasm. The protein resides in the cytosol. This is an uncharacterized protein from Saccharomyces cerevisiae (strain ATCC 204508 / S288c) (Baker's yeast).